The sequence spans 461 residues: Tol-Pal system protein TolB 2 (461 aa).

Residues 1–20 (MKIRHLLLLAGLVSAPAIVA) form the signal peptide. The segment at 28–47 (SSSAAQASGDDDGGLTGSVS) is disordered.

Belongs to the TolB family. As to quaternary structure, the Tol-Pal system is composed of five core proteins: the inner membrane proteins TolA, TolQ and TolR, the periplasmic protein TolB and the outer membrane protein Pal. They form a network linking the inner and outer membranes and the peptidoglycan layer.

The protein resides in the periplasm. Part of the Tol-Pal system, which plays a role in outer membrane invagination during cell division and is important for maintaining outer membrane integrity. The chain is Tol-Pal system protein TolB 2 from Novosphingobium aromaticivorans (strain ATCC 700278 / DSM 12444 / CCUG 56034 / CIP 105152 / NBRC 16084 / F199).